Consider the following 424-residue polypeptide: Enolase (424 aa).

A (2R)-2-phosphoglycerate-binding site is contributed by Q162. Catalysis depends on E204, which acts as the Proton donor. Mg(2+)-binding residues include D241, E284, and D311. 4 residues coordinate (2R)-2-phosphoglycerate: K336, R365, S366, and K387. The active-site Proton acceptor is the K336.

This sequence belongs to the enolase family. The cofactor is Mg(2+).

The protein resides in the cytoplasm. Its subcellular location is the secreted. The protein localises to the cell surface. The enzyme catalyses (2R)-2-phosphoglycerate = phosphoenolpyruvate + H2O. Its pathway is carbohydrate degradation; glycolysis; pyruvate from D-glyceraldehyde 3-phosphate: step 4/5. Functionally, catalyzes the reversible conversion of 2-phosphoglycerate (2-PG) into phosphoenolpyruvate (PEP). It is essential for the degradation of carbohydrates via glycolysis. The sequence is that of Enolase from Chelativorans sp. (strain BNC1).